Consider the following 107-residue polypeptide: MRDIMGMMGKVKEMQAKMEKMQAEIAALEIDGTSGGGLVTVRLDGKGHMKSLKVDPSLFKEDDVEILEDLIVAAHKDAKDKAEAVQAEKTRELTAGLPIPPGMKLPF.

This sequence belongs to the YbaB/EbfC family. As to quaternary structure, homodimer.

The protein localises to the cytoplasm. Its subcellular location is the nucleoid. Binds to DNA and alters its conformation. May be involved in regulation of gene expression, nucleoid organization and DNA protection. This Rhizobium meliloti (strain 1021) (Ensifer meliloti) protein is Nucleoid-associated protein R00231.